A 487-amino-acid polypeptide reads, in one-letter code: MRFYDTASAEVRDFVPLIPGKVSLYYCGATVQGLPHVGHIRSAIAFDQLTRWLEYRGFRVTVVRNVTDIDDKILAKSALSFEPDFEEGPDDVREEEWWALAYRYEQAFLKAYDTLGVSRPTYEPRATGHIPEMHALIQGLIDRGHAYPALDDSGDVYFDVRSWNRYGSLTRQKIDDMQGAPDADPRGKKDPRDFALWKGHKEGEPTTASWVSPWGTGRPGWHLECSAMVTKYLGTEFDIHGGGLDLRFPHHENEMAQSQAAGHAFANFWMHNGMVTYQGEKMSKSIGNTVSPAEMLELASPRVVRYYLGQAQYRSVLDYQPTSLQEAAAAVERIDGFIARAVRTLSGSVVSGAAELLFSSHGTVPDAFAAAMDDDLNVPQALAALHDTVRAGNTALTAGDNSAARTALHSVTDMLRVLGLNDVAAPARDEQADTALGVLVEAQLGARAQARATKDWAASDAIRDTLAAAGVVVEDGPDGASWSLKRG.

Cys-27 contacts Zn(2+). A 'HIGH' region motif is present at residues 29–39 (ATVQGLPHVGH). The tract at residues 174–194 (IDDMQGAPDADPRGKKDPRDF) is disordered. Positions 183–194 (ADPRGKKDPRDF) are enriched in basic and acidic residues. Residues Cys-225, His-250, and Glu-254 each contribute to the Zn(2+) site. Residues 281–285 (KMSKS) carry the 'KMSKS' region motif. Lys-284 contributes to the ATP binding site.

It belongs to the class-I aminoacyl-tRNA synthetase family. In terms of assembly, monomer. The cofactor is Zn(2+).

It is found in the cytoplasm. The enzyme catalyses tRNA(Cys) + L-cysteine + ATP = L-cysteinyl-tRNA(Cys) + AMP + diphosphate. This is Cysteine--tRNA ligase from Arthrobacter sp. (strain FB24).